Here is a 206-residue protein sequence, read N- to C-terminus: AT-hook motif nuclear-localized protein 28 (206 aa).

Disordered stretches follow at residues 1 to 21 and 160 to 206; these read METV…PKAP and TEEE…PSPY. The segment at residues 5–17 is a DNA-binding region (a.T hook); that stretch reads GRPRGRPRGSKNK. Positions 7 to 18 are enriched in basic residues; sequence PRGRPRGSKNKP. Residues 27–173 enclose the PPC domain; the sequence is DPPMSPYILE…QRNSAEGEEE (147 aa).

It is found in the nucleus. Its function is as follows. Transcription factor that specifically binds AT-rich DNA sequences related to the nuclear matrix attachment regions (MARs). This chain is AT-hook motif nuclear-localized protein 28, found in Arabidopsis thaliana (Mouse-ear cress).